A 138-amino-acid chain; its full sequence is Small ribosomal subunit protein uS11c (138 aa).

Positions Met-1–Ala-22 are disordered. Over residues Ser-9–Ala-22 the composition is skewed to basic residues.

It belongs to the universal ribosomal protein uS11 family. Part of the 30S ribosomal subunit.

It is found in the plastid. Its subcellular location is the chloroplast. This Nicotiana tabacum (Common tobacco) protein is Small ribosomal subunit protein uS11c.